A 379-amino-acid polypeptide reads, in one-letter code: Alcohol dehydrogenase class-P (379 aa).

Serine 2 carries the N-acetylserine modification. Cysteine 47 provides a ligand contact to Zn(2+). An an alcohol-binding site is contributed by threonine 49. Threonine 49 contacts NAD(+). 8 residues coordinate Zn(2+): aspartate 50, histidine 69, glutamate 70, cysteine 99, cysteine 102, cysteine 105, cysteine 113, and cysteine 177. An an alcohol-binding site is contributed by histidine 69. The NAD(+) site is built by valine 206 and aspartate 226. The residue at position 229 (serine 229) is a Phosphoserine. The NAD(+) site is built by arginine 231, threonine 272, valine 295, valine 297, threonine 320, phenylalanine 322, and arginine 372.

The protein belongs to the zinc-containing alcohol dehydrogenase family. Class-P subfamily. Homodimer. The cofactor is Zn(2+). In terms of processing, glutathionylated. Root specific. Also detected in etiolated seedlings and leaves in cold conditions.

It is found in the cytoplasm. It carries out the reaction a primary alcohol + NAD(+) = an aldehyde + NADH + H(+). The enzyme catalyses a secondary alcohol + NAD(+) = a ketone + NADH + H(+). It catalyses the reaction ethanol + NAD(+) = acetaldehyde + NADH + H(+). With respect to regulation, alcohol dehydrogenase activity show inverse correlation with the decreasing availability of oxygen. Slightly repressed by thiol-modifying agents N-ethylmaleimide (NEM) and 5,5-dithio-bis-(2-nitrobenzoic acid) (DTNB), as well as by methyl methanethiosulfonate (MMTS) in a dose-dependent manner. Inhibited by hydrogen peroxide H(2)O(2). In terms of biological role, alcohol dehydrogenase catalyzing the reduction of toxic aldehydes to the corresponding alcohols. Mostly active on ethanol (EtOH), but exhibits broad substrate selectivity for primary and secondary alcohols (e.g. cinnamyl alcohol, octanol, geraniol, butanol, propyl alcohol, pentanol, isopentanol, ethylene glycol, isopropanol, methanol and tertiary butyl alcohol). Also catalyzes the reverse reaction to convert allyl alcohol to highly toxic acryl-aldehyde. Required for survival and acclimation in hypoxic conditions, especially in roots. Not able to catalyze NADH-dependent degradation of S-nitrosoglutathione (GSNO). This chain is Alcohol dehydrogenase class-P, found in Arabidopsis thaliana (Mouse-ear cress).